Here is a 560-residue protein sequence, read N- to C-terminus: Proteasome-associated ATPase (560 aa).

A compositionally biased stretch (basic and acidic residues) spans 1–19 (MSQQHDDRRPPDTADRDLA). Residues 1–21 (MSQQHDDRRPPDTADRDLARQ) form a disordered region. A coiled-coil region spans residues 16-55 (RDLARQATSLAEKNERLTAALTAARAQLVEMKAQLEEVSK). 237 to 242 (GCGKTL) contacts ATP. The segment at 559 to 560 (YL) is docks into pockets in the proteasome alpha-ring.

The protein belongs to the AAA ATPase family. In terms of assembly, homohexamer. Assembles into a hexameric ring structure that caps the 20S proteasome core. Strongly interacts with the prokaryotic ubiquitin-like protein Pup through a hydrophobic interface; the interacting region of ARC lies in its N-terminal coiled-coil domain. There is one Pup binding site per ARC hexamer ring. Upon ATP-binding, the C-terminus of ARC interacts with the alpha-rings of the proteasome core, possibly by binding to the intersubunit pockets.

The protein operates within protein degradation; proteasomal Pup-dependent pathway. In terms of biological role, ATPase which is responsible for recognizing, binding, unfolding and translocation of pupylated proteins into the bacterial 20S proteasome core particle. May be essential for opening the gate of the 20S proteasome via an interaction with its C-terminus, thereby allowing substrate entry and access to the site of proteolysis. Thus, the C-termini of the proteasomal ATPase may function like a 'key in a lock' to induce gate opening and therefore regulate proteolysis. The sequence is that of Proteasome-associated ATPase from Beutenbergia cavernae (strain ATCC BAA-8 / DSM 12333 / CCUG 43141 / JCM 11478 / NBRC 16432 / NCIMB 13614 / HKI 0122).